The sequence spans 525 residues: Phosphoenolpyruvate carboxykinase (ATP) (525 aa).

Substrate-binding residues include R54, Y190, and K196. ATP-binding positions include K196, H215, and 231–239 (GLSGTGKTT). Mn(2+) is bound by residues K196 and H215. D252 is a binding site for Mn(2+). Residues E280, R316, and T441 each coordinate ATP. R316 contributes to the substrate binding site.

This sequence belongs to the phosphoenolpyruvate carboxykinase (ATP) family. It depends on Mn(2+) as a cofactor.

Its subcellular location is the cytoplasm. It carries out the reaction oxaloacetate + ATP = phosphoenolpyruvate + ADP + CO2. It functions in the pathway carbohydrate biosynthesis; gluconeogenesis. In terms of biological role, involved in the gluconeogenesis. Catalyzes the conversion of oxaloacetate (OAA) to phosphoenolpyruvate (PEP) through direct phosphoryl transfer between the nucleoside triphosphate and OAA. This Nitratiruptor sp. (strain SB155-2) protein is Phosphoenolpyruvate carboxykinase (ATP).